We begin with the raw amino-acid sequence, 290 residues long: Ribonuclease HIII (290 aa).

In terms of domain architecture, RNase H type-2 spans 78-290 (LPLIGTDEVG…FKNTEKAKNA (213 aa)). Asp-84, Glu-85, and Asp-187 together coordinate a divalent metal cation.

Belongs to the RNase HII family. RnhC subfamily. The cofactor is Mn(2+). It depends on Mg(2+) as a cofactor.

It localises to the cytoplasm. The enzyme catalyses Endonucleolytic cleavage to 5'-phosphomonoester.. Functionally, endonuclease that specifically degrades the RNA of RNA-DNA hybrids. In Streptococcus pneumoniae serotype 2 (strain D39 / NCTC 7466), this protein is Ribonuclease HIII.